Reading from the N-terminus, the 212-residue chain is Large ribosomal subunit protein uL3 (212 aa).

Belongs to the universal ribosomal protein uL3 family. Part of the 50S ribosomal subunit. Forms a cluster with proteins L14 and L19.

In terms of biological role, one of the primary rRNA binding proteins, it binds directly near the 3'-end of the 23S rRNA, where it nucleates assembly of the 50S subunit. This is Large ribosomal subunit protein uL3 from Acetivibrio thermocellus (strain ATCC 27405 / DSM 1237 / JCM 9322 / NBRC 103400 / NCIMB 10682 / NRRL B-4536 / VPI 7372) (Clostridium thermocellum).